Reading from the N-terminus, the 444-residue chain is Tryptophan 5-hydroxylase 1 (444 aa).

An ACT domain is found at 19–94; that stretch reads TLIFSLKNEV…TVLSVDSPDQ (76 aa). The residue at position 58 (Ser58) is a Phosphoserine; by PKA. Residues Tyr235, Arg257, and Thr265 each contribute to the L-tryptophan site. His272, His277, and Glu317 together coordinate Fe cation. L-tryptophan-binding residues include Ser336 and Ile366.

Belongs to the biopterin-dependent aromatic amino acid hydroxylase family. As to quaternary structure, homotetramer. Interacts with DNAJC12. Fe(2+) serves as cofactor. In terms of processing, ubiquitinated, leading to its degradation by the proteasome. Ubiquitinated is triggered by phosphorylation. Phosphorylated; triggering degradation by the proteasome.

The catalysed reaction is (6R)-L-erythro-5,6,7,8-tetrahydrobiopterin + L-tryptophan + O2 = 5-hydroxy-L-tryptophan + (4aS,6R)-4a-hydroxy-L-erythro-5,6,7,8-tetrahydrobiopterin. Its pathway is aromatic compound metabolism; serotonin biosynthesis; serotonin from L-tryptophan: step 1/2. In terms of biological role, oxidizes L-tryptophan to 5-hydroxy-l-tryptophan in the rate-determining step of serotonin biosynthesis. This is Tryptophan 5-hydroxylase 1 (Tph1) from Rattus norvegicus (Rat).